The chain runs to 670 residues: DNA ligase (670 aa).

Residues D33 to D37, S82 to L83, and E114 contribute to the NAD(+) site. K116 serves as the catalytic N6-AMP-lysine intermediate. Positions 137, 174, 291, and 315 each coordinate NAD(+). Positions 409, 412, 427, and 433 each coordinate Zn(2+). A BRCT domain is found at G593–K670.

It belongs to the NAD-dependent DNA ligase family. LigA subfamily. The cofactor is Mg(2+). Mn(2+) is required as a cofactor.

The enzyme catalyses NAD(+) + (deoxyribonucleotide)n-3'-hydroxyl + 5'-phospho-(deoxyribonucleotide)m = (deoxyribonucleotide)n+m + AMP + beta-nicotinamide D-nucleotide.. Functionally, DNA ligase that catalyzes the formation of phosphodiester linkages between 5'-phosphoryl and 3'-hydroxyl groups in double-stranded DNA using NAD as a coenzyme and as the energy source for the reaction. It is essential for DNA replication and repair of damaged DNA. In Vibrio campbellii (strain ATCC BAA-1116), this protein is DNA ligase.